Consider the following 379-residue polypeptide: Methionine aminopeptidase 1 (379 aa).

A C6H2-type zinc finger spans residues 7-60 (KHICCGIDCNNEADRLQCPKCLNDGVKSYFCGQECFRNSWNIHKHLHRPPNVEK). Zn(2+) is bound by residues Cys-10, Cys-15, Cys-24, Cys-27, Cys-37, Cys-41, His-49, and His-53. Position 192 (His-192) interacts with a protein. Residues Asp-209, Asp-220, and His-289 each contribute to the Zn(2+) site. His-296 contributes to the a protein binding site. The Zn(2+) site is built by Glu-322 and Glu-353. Ser-373 carries the post-translational modification Phosphoserine.

This sequence belongs to the peptidase M24A family. Methionine aminopeptidase type 1 subfamily. Associates with the 60S ribosomal subunit of the 80S translational complex. Requires Zn(2+) as cofactor. It depends on Co(2+) as a cofactor. The cofactor is Mn(2+). Fe(2+) is required as a cofactor.

The protein localises to the cytoplasm. It localises to the nucleus. It is found in the nucleolus. The catalysed reaction is Release of N-terminal amino acids, preferentially methionine, from peptides and arylamides.. Cotranslationally removes the N-terminal methionine from nascent proteins. The N-terminal methionine is often cleaved when the second residue in the primary sequence is small and uncharged (Met-Ala-, Cys, Gly, Pro, Ser, Thr, or Val). The sequence is that of Methionine aminopeptidase 1 (fma1) from Schizosaccharomyces pombe (strain 972 / ATCC 24843) (Fission yeast).